A 452-amino-acid polypeptide reads, in one-letter code: NADH-ubiquinone oxidoreductase chain 4 (452 aa).

14 consecutive transmembrane segments (helical) span residues 7–27, 57–77, 95–115, 116–136, 145–165, 186–206, 218–238, 251–271, 278–298, 303–323, 336–356, 360–380, 386–406, and 428–448; these read VLMS…IIAL, MMSF…ILAS, VILL…MFYI, WFEA…YQPE, MIYT…IFIV, MALA…MFTV, PIAG…YGIL, TSSL…LICL, SLIA…ALMS, FQAA…LFVM, LFLM…WFLF, NMAA…TSIL, AFIL…YMYT, and LTLM…PELI.

Belongs to the complex I subunit 4 family.

It is found in the mitochondrion membrane. The catalysed reaction is a ubiquinone + NADH + 5 H(+)(in) = a ubiquinol + NAD(+) + 4 H(+)(out). In terms of biological role, core subunit of the mitochondrial membrane respiratory chain NADH dehydrogenase (Complex I) that is believed to belong to the minimal assembly required for catalysis. Complex I functions in the transfer of electrons from NADH to the respiratory chain. The immediate electron acceptor for the enzyme is believed to be ubiquinone. The protein is NADH-ubiquinone oxidoreductase chain 4 (ND4) of Lumbricus terrestris (Common earthworm).